Reading from the N-terminus, the 213-residue chain is Protein ras-1 (213 aa).

15–22 (GGGGVGKS) is a binding site for GTP. The Effector region motif lies at 37–45 (YDPTIEDSY). GTP contacts are provided by residues 62-66 (DTAGQ) and 121-124 (NKYD). Residue cysteine 210 is modified to Cysteine methyl ester. Cysteine 210 is lipidated: S-farnesyl cysteine. The propeptide at 211–213 (IMM) is removed in mature form.

The protein belongs to the small GTPase superfamily. Ras family.

Its subcellular location is the cell membrane. It catalyses the reaction GTP + H2O = GDP + phosphate + H(+). Functionally, ras proteins bind GDP/GTP and possess intrinsic GTPase activity. The protein is Protein ras-1 (ras-1) of Neurospora crassa (strain ATCC 24698 / 74-OR23-1A / CBS 708.71 / DSM 1257 / FGSC 987).